We begin with the raw amino-acid sequence, 85 residues long: UPF0297 protein Clos_1665 (85 aa).

This sequence belongs to the UPF0297 family.

The chain is UPF0297 protein Clos_1665 from Alkaliphilus oremlandii (strain OhILAs) (Clostridium oremlandii (strain OhILAs)).